We begin with the raw amino-acid sequence, 138 residues long: Large ribosomal subunit protein uL16 (138 aa).

Residues 1-15 (MLSPKKVKYRKKQRG) show a composition bias toward basic residues. Residues 1 to 21 (MLSPKKVKYRKKQRGRLSGEA) form a disordered region.

It belongs to the universal ribosomal protein uL16 family. In terms of assembly, part of the 50S ribosomal subunit.

Its function is as follows. Binds 23S rRNA and is also seen to make contacts with the A and possibly P site tRNAs. The sequence is that of Large ribosomal subunit protein uL16 from Borreliella burgdorferi (strain ATCC 35210 / DSM 4680 / CIP 102532 / B31) (Borrelia burgdorferi).